Consider the following 366-residue polypeptide: MEPQLNQEVINTAAQHDGPIETDAVIVGAGPVGLFQVFELGLLEIKAHVIDSLAYPGGQCIELYPDKPIYDIPAVPMCTGKELTDSLLKQIEPFGATFHFGQEVSVVEKQEDGRFFVETSKGTKFLTKTIFIAAGVGAFQPKLLRVDGLDQFDNTQLFYRVKNPADFAGKNLVIVGGGDSALDWALNFVAEGPNKAESVILVHRRDGFKAAPASVAKMKELCDAYEMQFIVGQVTGYDEKNGKMTGAKVTGADGVTRVVPLDVLLVFFGLSPKLGPIAHWGLDIERKQLMVDTEKFSTNIPGIFAVGDINTYPGKKKLILSGFHECALAAFGAAPFIFPDKKIHLQYTTTSPKLHKVLGVESPVFD.

D51, Q59, Y64, V104, F139, D308, and T349 together coordinate FAD.

This sequence belongs to the ferredoxin--NADP reductase type 2 family. Homodimer. FAD serves as cofactor.

The catalysed reaction is 2 reduced [2Fe-2S]-[ferredoxin] + NADP(+) + H(+) = 2 oxidized [2Fe-2S]-[ferredoxin] + NADPH. This chain is Ferredoxin--NADP reductase, found in Polaromonas sp. (strain JS666 / ATCC BAA-500).